A 484-amino-acid polypeptide reads, in one-letter code: Glycogen synthase (484 aa).

Position 15 (Lys15) interacts with ADP-alpha-D-glucose.

The protein belongs to the glycosyltransferase 1 family. Bacterial/plant glycogen synthase subfamily.

The enzyme catalyses [(1-&gt;4)-alpha-D-glucosyl](n) + ADP-alpha-D-glucose = [(1-&gt;4)-alpha-D-glucosyl](n+1) + ADP + H(+). The protein operates within glycan biosynthesis; glycogen biosynthesis. Synthesizes alpha-1,4-glucan chains using ADP-glucose. In Anoxybacillus flavithermus (strain DSM 21510 / WK1), this protein is Glycogen synthase.